Reading from the N-terminus, the 662-residue chain is Glycogen debranching enzyme (662 aa).

The Nucleophile role is filled by aspartate 338. Residue glutamate 373 is the Proton donor of the active site.

Belongs to the glycosyl hydrolase 13 family.

The catalysed reaction is Hydrolysis of (1-&gt;6)-alpha-D-glucosidic linkages to branches with degrees of polymerization of three or four glucose residues in limit dextrin.. It participates in glycan degradation; glycogen degradation. In terms of biological role, removes maltotriose and maltotetraose chains that are attached by 1,6-alpha-linkage to the limit dextrin main chain, generating a debranched limit dextrin. In Yersinia pseudotuberculosis serotype O:1b (strain IP 31758), this protein is Glycogen debranching enzyme.